Here is a 371-residue protein sequence, read N- to C-terminus: Thyroid transcription factor 1 (371 aa).

The segment at residues 161 to 220 (RRKRRVLFSQAQVYELERRFKQQKYLSAPEREHLASMIHLTPTQVKIWFQNHRYKMKRQA) is a DNA-binding region (homeobox). Disordered regions lie at residues 219 to 294 (QAKD…QQQA) and 308 to 342 (SGGP…ALQG). Positions 233–243 (SGGGGGGGGAG) are enriched in gly residues. Composition is skewed to low complexity over residues 244 to 253 (CPQQQQAQQQ) and 272 to 294 (AGAP…QQQA).

This sequence belongs to the NK-2 homeobox family. Phosphorylated on serine residues. As to expression, thyroid, lung and CNS.

The protein localises to the nucleus. Functionally, transcription factor that binds and activates the promoter of thyroid specific genes such as thyroglobulin, thyroperoxidase, and thyrotropin receptor. Crucial in the maintenance of the thyroid differentiation phenotype. May play a role in lung development and surfactant homeostasis. This Canis lupus familiaris (Dog) protein is Thyroid transcription factor 1 (TITF1).